Here is a 238-residue protein sequence, read N- to C-terminus: MRPSGRSANQVRPVTLTRNYTKHAEGSVLVAFGDTKVLCTASIEEGVPRFLKGQGQGWITAEYGMLPRATHTRNAREAAKGKQGGRTMEIQRLIARALRAAVDLKVLGEFTITLDCDVIQADGGTRTASITGACVALADALNKLIAAGKLKKNPMKGMVAAVSVGIVNGEALCDLEYVEDSVAETDMNVVMTEDGRIIEVQGTAEGEPFTHEELLTLLALARGGIESIVTTQKAALQN.

Residues R86 and 124–126 (GTR) each bind phosphate.

It belongs to the RNase PH family. As to quaternary structure, homohexameric ring arranged as a trimer of dimers.

It carries out the reaction tRNA(n+1) + phosphate = tRNA(n) + a ribonucleoside 5'-diphosphate. In terms of biological role, phosphorolytic 3'-5' exoribonuclease that plays an important role in tRNA 3'-end maturation. Removes nucleotide residues following the 3'-CCA terminus of tRNAs; can also add nucleotides to the ends of RNA molecules by using nucleoside diphosphates as substrates, but this may not be physiologically important. Probably plays a role in initiation of 16S rRNA degradation (leading to ribosome degradation) during starvation. The sequence is that of Ribonuclease PH from Enterobacter sp. (strain 638).